We begin with the raw amino-acid sequence, 1252 residues long: MVEAAPAGSGPLRRTFLVPEIKSLDQYDFSRAKAAASLAWVLRAAFGGAEHVPPELWEPFYTDQYAQEHVKPPVTRLLLSAELYCRAWRQALPQLEPSPSPSALLALLARRGTVPSLPEHPVREADLKHQPILMGAHLAVIDALMVAFSFEWTKTLPGPLALSSLEHKLLFWVDTTVRRLQEKTEQEAAQRASPAAPLDGASPAQPSIRYRKDRAIARRAPCFPNVTTLQDLASGAALAATIHCYCPQLLRLEEVCLKDPMSVADSLYNLQLVQDFCASHLPRGCPLSLEDLLYVPPPLKVNLVVLLAEMYMCFEVLKPDFVQAKDLPDGHAVSPRNTETVPSQNNSGSSSPVFNFRHPLLSPGGPQSPLRGSTGSLKSSPSMSHMEALGKAWNRQLSRPLSQAVSFSTPFGLDSDVDVVMGDPVLLRSVSSDSLGPPRPVSTSSRNSAQPAPESGDLPTIEEALQIIHSAEPRLLPDGAADGSFYLHSPEGLSKPPLSPYPPEGASKPLSDRLNKAPIYISHPENPSKSSPCSTGEILKPPPPSEGSPKAVASSPAANNSEVKMTSFAERKKQLVKAEAESGLGSPTSTPVAPEALSSEMSELGARLEEKRRAIEAQKRRIEAIFAKHRQRLGKSAFLQVQPREAAGEAEEEAELGSVPGGERPAGEGQGEPSLRHKSVTFSPDLGPVPPEGLGDYNRAVSKLSAALSSLQRDMQRLTDQQQRLLAPPEAPGPAPPPAAWVIPGPATGPKAASPSPARRAPAARRSPGPGPSPTPRSPKHARPAELKLAPLTRVLTPPHDVDSLPHLRKFSPSQVPVQTRSSILLSEGTPPEEPTTKPALIEIPLASLGEPAADEEGDGSPPGAEDSLEEEASSEGEPRSGLGFFYKDEDKPEDEMAQKRASLLERQQRRVEEARRRKQWQEAEKEQKREEAARLAQEAPGLAFTTPVVASAAPVATLAPTTRAMAPAEEEVGPRRGDFTRLEYERRAQLKLMDDLDKVLRPRASGTGGPGRGGRRATRPRSGCCDDSALARSPARGLLGSRLSKVYSQSTLSLSTVANEAPNNLGVKRPTSRAPSPSGLMSPSRLPGSRERDWENGSNASSPASVPEYTGPRLYKEPSAKSNKFIIHNALSHCCLAGKVNEPQKNRILEEIEKSKANHFLILFRDSSCQFRALYTLSGETEELSRLAGYGPRTVTPAMVEGIYKYNSDRKRFTQIPAKTMSMSVDAFTIQGHLWQSKKPTTPKKGGGTPK.

Disordered stretches follow at residues 183-205, 331-385, 429-457, 479-604, 638-697, 712-935, 962-981, 996-1030, and 1063-1114; these read KTEQ…SPAQ, HAVS…SMSH, SVSS…ESGD, GAAD…MSEL, FLQV…LGDY, QRDM…EAAR, TTRA…GDFT, DLDK…DDSA, and PNNL…TGPR. T184 bears the Phosphothreonine mark. Phosphoserine is present on S193. A Calponin-homology (CH) domain is found at 203–312; the sequence is PAQPSIRYRK…LVVLLAEMYM (110 aa). 6 positions are modified to phosphoserine: S334, S347, S351, S368, S373, and S382. Residues 335-353 are compositionally biased toward polar residues; sequence PRNTETVPSQNNSGSSSPV. The span at 359–373 shows a compositional bias: low complexity; it reads PLLSPGGPQSPLRGS. Polar residues-rich tracts occupy residues 374 to 383, 441 to 450, and 525 to 534; these read TGSLKSSPSM, VSTSSRNSAQ, and ENPSKSSPCS. Phosphoserine is present on residues S548, S555, and S561. The segment covering 569–580 has biased composition (basic and acidic residues); the sequence is AERKKQLVKAEA. Residues 595-629 are a coiled coil; the sequence is EALSSEMSELGARLEEKRRAIEAQKRRIEAIFAKH. S683 bears the Phosphoserine mark. Positions 696-727 form a coiled coil; that stretch reads DYNRAVSKLSAALSSLQRDMQRLTDQQQRLLA. The segment covering 729 to 739 has biased composition (pro residues); sequence PEAPGPAPPPA. A compositionally biased stretch (low complexity) spans 740–768; that stretch reads AWVIPGPATGPKAASPSPARRAPAARRSP. Residue S767 is modified to Phosphoserine. T797 carries the phosphothreonine modification. S812 and S881 each carry phosphoserine. The span at 812–825 shows a compositional bias: polar residues; it reads SPSQVPVQTRSSIL. The span at 887-934 shows a compositional bias: basic and acidic residues; it reads YKDEDKPEDEMAQKRASLLERQQRRVEEARRRKQWQEAEKEQKREEAA. The stretch at 896 to 943 forms a coiled coil; sequence EMAQKRASLLERQQRRVEEARRRKQWQEAEKEQKREEAARLAQEAPGL. S1077 carries the post-translational modification Phosphoserine. A CKK domain is found at 1112–1246; sequence GPRLYKEPSA…QSKKPTTPKK (135 aa).

It belongs to the CAMSAP1 family. In terms of assembly, interacts with PLEKHA7. Interacts with CAMSAP2. Interacts with KATNA1 and KATNB1; leading to regulate the length of CAMSAP3-decorated microtubule stretches. Interacts with AKAP9; regulating Golgi assembly in epithelial cells. Interacts with MACF1. Interacts with isoform C of CDH23; leading to inhibit CAMSAP3 ability to induce microtubule bundle formation. Interacts with AKNA. In terms of tissue distribution, expressed at the apical surface of respiratory epithelia, as well as in the acini of submucosal glands (at protein level). In cochlea, restricted to the organ of Corti and increases during development (at protein level). Highly expressed in both sensory hair cells and supporting cells.

The protein localises to the cytoplasm. It is found in the cytoskeleton. The protein resides in the cell junction. It localises to the adherens junction. Its subcellular location is the cilium axoneme. The protein localises to the cilium basal body. Its function is as follows. Key microtubule-organizing protein that specifically binds the minus-end of non-centrosomal microtubules and regulates their dynamics and organization. Specifically recognizes growing microtubule minus-ends and autonomously decorates and stabilizes microtubule lattice formed by microtubule minus-end polymerization. Acts on free microtubule minus-ends that are not capped by microtubule-nucleating proteins or other factors and protects microtubule minus-ends from depolymerization. In addition, it also reduces the velocity of microtubule polymerization. Required for the biogenesis and the maintenance of zonula adherens by anchoring the minus-end of microtubules to zonula adherens and by recruiting the kinesin KIFC3 to those junctional sites. Required for orienting the apical-to-basal polarity of microtubules in epithelial cells: acts by tethering non-centrosomal microtubules to the apical cortex, leading to their longitudinal orientation. Plays a key role in early embryos, which lack centrosomes: accumulates at the microtubule bridges that connect pairs of cells and enables the formation of a non-centrosomal microtubule-organizing center that directs intracellular transport in the early embryo. Couples non-centrosomal microtubules with actin: interaction with MACF1 at the minus ends of non-centrosomal microtubules, tethers the microtubules to actin filaments, regulating focal adhesion size and cell migration. Plays a key role in the generation of non-centrosomal microtubules by accumulating in the pericentrosomal region and cooperating with KATNA1 to release non-centrosomal microtubules from the centrosome. Through the microtubule cytoskeleton, also regulates the organization of cellular organelles including the Golgi and the early endosomes. Through interaction with AKAP9, involved in translocation of Golgi vesicles in epithelial cells, where microtubules are mainly non-centrosomal. Plays an important role in motile cilia function by facilitatating proper orientation of basal bodies and formation of central microtubule pairs in motile cilia. The sequence is that of Calmodulin-regulated spectrin-associated protein 3 from Mus musculus (Mouse).